Consider the following 1086-residue polypeptide: NAD(P) transhydrogenase, mitochondrial (1086 aa).

Residues 1-43 (MANLLKTVVTGCSCPFLSNLGSCKVLPGKKNFLRTFHTHRILW) constitute a mitochondrion transit peptide. The Mitochondrial matrix portion of the chain corresponds to 44–474 (CSAPVKPGIP…TITPFRKTMT (431 aa)). At K70 the chain carries N6-acetyllysine. Position 117 is an N6-succinyllysine (K117). 182–184 (RVT) is a binding site for NAD(+). K224 carries the N6-succinyllysine modification. Residues V237, 257-259 (DTR), and G287 contribute to the NAD(+) site. N6-succinyllysine is present on K294. NAD(+)-binding residues include E300 and L319. At K331 the chain carries N6-succinyllysine. An N6-acetyllysine modification is found at K397. 4 helical membrane passes run 475 to 493 (SASVYTAGLTGILGLGIAA), 501 to 521 (MVTTFGLAGIVGYHTVWGVTP), 527 to 546 (LMSVTNAISGLTAVGGLVLM), and 558 to 578 (GLAALATFISSVNIAGGFLVT). The Mitochondrial matrix segment spans residues 579–595 (QRMLDMFKRPTDPPEYN). The next 5 helical transmembrane spans lie at 596–616 (YLYLLPAGTFVGGYLASLYSG), 622–642 (IMYLGSGLCCVGALAGLSTQG), 646–666 (LGNALGMIGVAGGLAATLGGL), 672–691 (LLAQMSGAMALGGTIGLTIA), and 702–722 (LVAAFHSLVGLAAVLTCIAEY). The Cytoplasmic portion of the chain corresponds to 723 to 739 (IIEYPHFATDAAANLTK). 5 helical membrane-spanning segments follow: residues 740–760 (IVAYLGTYIGGVTFSGSLVAY), 778–797 (HLLNAGLLAGSVGGIIPFMM), 801–819 (FTTGITCLGSVSALSAVMG), 833–853 (VVITVLNSYSGWALCAEGFLL), and 857–879 (LLTIVGALIGSSGAILSYIMCVA). Over 880-1086 (MNRSLANVIL…QAKVRESYQK (207 aa)) the chain is Mitochondrial matrix. NADP(+) contacts are provided by residues Y933, 965–970 (VAGRMP), 1009–1011 (NDT), 1026–1027 (GM), 1042–1049 (KRSLGVGY), and 1068–1069 (DA). Position 1079 is an N6-succinyllysine (K1079).

This sequence in the N-terminal section; belongs to the AlaDH/PNT family. It in the C-terminal section; belongs to the PNT beta subunit family. Homodimer.

Its subcellular location is the mitochondrion inner membrane. The enzyme catalyses NAD(+) + NADPH + H(+)(in) = NADH + NADP(+) + H(+)(out). In terms of biological role, the transhydrogenation between NADH and NADP is coupled to respiration and ATP hydrolysis and functions as a proton pump across the membrane. May play a role in reactive oxygen species (ROS) detoxification in the adrenal gland. The chain is NAD(P) transhydrogenase, mitochondrial (NNT) from Bos taurus (Bovine).